The primary structure comprises 336 residues: MEEGSMFRSLLAILQWWGFNVTVIIMNKWIFQKLDFKFPLSVSCVHFICSSIGAYIVIKVLKLKPLIVVDPEDRWRRIFPMSFVFCINIVLGNVSLRYIPVSFMQTIKSFTPATTVVLQWLVWRKYFDWRIWASLVPIVGGILLTSVTELSFNMFGFCAALFGCLATSTKTILAESLLHGYKFDSINTVYYMAPFATMILGIPALLLEGSGILSWFEAHPAPWSALIIILSSGVLAFCLNFSIFYVIHSTTAVTFNVAGNLKVAVAVMVSWLIFRNPISYMNAVGCGITLVGCTFYGYVRHMLSQQTPGTPRTPRTPRSKMELLPLVNNDKLEGKV.

The next 9 membrane-spanning stretches (helical) occupy residues 11–31 (LAIL…KWIF), 38–58 (FPLS…YIVI), 83–103 (FVFC…PVSF), 131–151 (IWAS…TELS), 154–174 (MFGF…TILA), 193–213 (APFA…SGIL), 227–247 (IIIL…FYVI), 254–274 (TFNV…WLIF), and 278–298 (ISYM…FYGY).

Belongs to the TPT transporter family. TPT (TC 2.A.7.9) subfamily.

The protein resides in the membrane. Functionally, nucleotide sugar transporter that specifically transports UDP-galactose. The polypeptide is UDP-galactose transporter 1 (Arabidopsis thaliana (Mouse-ear cress)).